The chain runs to 134 residues: Probable histone H2A.3 (134 aa).

This sequence belongs to the histone H2A family. As to quaternary structure, the nucleosome is a histone octamer containing two molecules each of H2A, H2B, H3 and H4 assembled in one H3-H4 heterotetramer and two H2A-H2B heterodimers. The octamer wraps approximately 147 bp of DNA.

Its subcellular location is the nucleus. It is found in the chromosome. Functionally, core component of nucleosome. Nucleosomes wrap and compact DNA into chromatin, limiting DNA accessibility to the cellular machineries which require DNA as a template. Histones thereby play a central role in transcription regulation, DNA repair, DNA replication and chromosomal stability. DNA accessibility is regulated via a complex set of post-translational modifications of histones, also called histone code, and nucleosome remodeling. The chain is Probable histone H2A.3 from Oryza sativa subsp. indica (Rice).